The primary structure comprises 197 residues: Holliday junction branch migration complex subunit RuvA (197 aa).

Residues 1–63 (MYDYIKGNLT…EDAHLLYGFH (63 aa)) form a domain I region. The segment at 64–142 (TEDEKAVFLN…DINEVSTDKS (79 aa)) is domain II. The flexible linker stretch occupies residues 143–147 (KVSTI). A domain III region spans residues 148–197 (NNNQELEEAVEALLALGYKTNELKKIEKFFEGTTDTAENYIKSALKMLMK).

This sequence belongs to the RuvA family. In terms of assembly, homotetramer. Forms an RuvA(8)-RuvB(12)-Holliday junction (HJ) complex. HJ DNA is sandwiched between 2 RuvA tetramers; dsDNA enters through RuvA and exits via RuvB. An RuvB hexamer assembles on each DNA strand where it exits the tetramer. Each RuvB hexamer is contacted by two RuvA subunits (via domain III) on 2 adjacent RuvB subunits; this complex drives branch migration. In the full resolvosome a probable DNA-RuvA(4)-RuvB(12)-RuvC(2) complex forms which resolves the HJ.

It is found in the cytoplasm. In terms of biological role, the RuvA-RuvB-RuvC complex processes Holliday junction (HJ) DNA during genetic recombination and DNA repair, while the RuvA-RuvB complex plays an important role in the rescue of blocked DNA replication forks via replication fork reversal (RFR). RuvA specifically binds to HJ cruciform DNA, conferring on it an open structure. The RuvB hexamer acts as an ATP-dependent pump, pulling dsDNA into and through the RuvAB complex. HJ branch migration allows RuvC to scan DNA until it finds its consensus sequence, where it cleaves and resolves the cruciform DNA. The polypeptide is Holliday junction branch migration complex subunit RuvA (Streptococcus mutans serotype c (strain ATCC 700610 / UA159)).